The following is a 66-amino-acid chain: U-scoloptoxin(04)-Ssd2a (66 aa).

The N-terminal stretch at Met1–Ser19 is a signal peptide.

It belongs to the scoloptoxin-04 family. Contains 2 disulfide bonds. In terms of tissue distribution, expressed by the venom gland.

It is found in the secreted. This is U-scoloptoxin(04)-Ssd2a from Scolopendra dehaani (Thai centipede).